Reading from the N-terminus, the 376-residue chain is Probable deoxyhypusine synthase (376 aa).

NAD(+) contacts are provided by residues 105-109, 131-133, E137, and D238; these read SNLVS and TAG. Residue 136–137 participates in spermidine binding; that stretch reads EE. Position 243 (D243) interacts with spermidine. An NAD(+)-binding site is contributed by G283. H288 is a spermidine binding site. Residue 308 to 309 coordinates NAD(+); it reads TG. Spermidine contacts are provided by residues 314-316 and 323-329; these read GSD and EAVSWGK. The active-site Nucleophile is the K329. 342–343 provides a ligand contact to NAD(+); that stretch reads EA.

The protein belongs to the deoxyhypusine synthase family. It depends on NAD(+) as a cofactor.

The enzyme catalyses [eIF5A protein]-L-lysine + spermidine = [eIF5A protein]-deoxyhypusine + propane-1,3-diamine. The protein operates within protein modification; eIF5A hypusination. Functionally, catalyzes the NAD-dependent oxidative cleavage of spermidine and the subsequent transfer of the butylamine moiety of spermidine to the epsilon-amino group of a critical lysine residue of the eIF-5A precursor protein to form the intermediate deoxyhypusine residue. This is the first step of the post-translational modification of that lysine into an unusual amino acid residue named hypusine. Hypusination is unique to mature eIF-5A factor and is essential for its function. The polypeptide is Probable deoxyhypusine synthase (dhps) (Dictyostelium discoideum (Social amoeba)).